A 444-amino-acid chain; its full sequence is MRLSRYFLPVLKETPSDAEIVSHQLMLRAGMIKQEAAGIYAWLPLGHRVLRKIEQIVREEQDRAGAVELLMPTIQSADLWRESGRYDDYGDEMLRITDRHDRDMLFGPTNEEMITDIFRSYCKSYKDVPKLLYHIQWKFRDERRPRFGVMRGREFLMKDAYSFDVDEAAARRSYNRMFVAYLNTFARLGLKAVPMQADTGPIGGDLSHEFIVLAETGESEVFCHADLVEMGAPGLDVDFDGDLQPLVDQRTALYAATEEMHQPEEFAAVPADRQLSARGIEVGHIFNFGTKYSEPMKATVQHQDGQPRPVHMGSYGVGVSRLLGAIIEAHHDEKGCIWPESVAPFGAGIINMRVGDEACDAACETAYQGLVKAGLDPLYDDTDSRAGAKFATADLIGLPYQLVVGPRGLKEGKIELKVRRTGETHEMSPEDAVSRLAEGAFSDV.

It belongs to the class-II aminoacyl-tRNA synthetase family. ProS type 2 subfamily. As to quaternary structure, homodimer.

The protein resides in the cytoplasm. It carries out the reaction tRNA(Pro) + L-proline + ATP = L-prolyl-tRNA(Pro) + AMP + diphosphate. Catalyzes the attachment of proline to tRNA(Pro) in a two-step reaction: proline is first activated by ATP to form Pro-AMP and then transferred to the acceptor end of tRNA(Pro). This is Proline--tRNA ligase from Maricaulis maris (strain MCS10) (Caulobacter maris).